We begin with the raw amino-acid sequence, 236 residues long: CDP-diacylglycerol--glycerol-3-phosphate 3-phosphatidyltransferase (236 aa).

The next 5 membrane-spanning stretches (helical) occupy residues 39 to 59 (IFIA…GVLA), 66 to 86 (ISIS…TAVI), 120 to 140 (VLIA…VFIV), 163 to 183 (WLGK…CFVW), and 196 to 216 (GLFF…FSIW).

Belongs to the CDP-alcohol phosphatidyltransferase class-I family.

Its subcellular location is the cell membrane. It catalyses the reaction a CDP-1,2-diacyl-sn-glycerol + sn-glycerol 3-phosphate = a 1,2-diacyl-sn-glycero-3-phospho-(1'-sn-glycero-3'-phosphate) + CMP + H(+). The protein operates within phospholipid metabolism; phosphatidylglycerol biosynthesis; phosphatidylglycerol from CDP-diacylglycerol: step 1/2. Functionally, this protein catalyzes the committed step to the synthesis of the acidic phospholipids. This Mycoplasma genitalium (strain ATCC 33530 / DSM 19775 / NCTC 10195 / G37) (Mycoplasmoides genitalium) protein is CDP-diacylglycerol--glycerol-3-phosphate 3-phosphatidyltransferase (pgsA).